Consider the following 475-residue polypeptide: Proton-coupled amino acid transporter 1 (475 aa).

Basic and acidic residues predominate over residues 1 to 15; that stretch reads MSTQRLRNEDYHDYS. A disordered region spans residues 1–32; that stretch reads MSTQRLRNEDYHDYSSTDVSPEESPSEGLGSF. At 1–50 the chain is on the cytoplasmic side; sequence MSTQRLRNEDYHDYSSTDVSPEESPSEGLGSFSPGSYQRLGENSSMTWFQ. A helical membrane pass occupies residues 51–71; the sequence is TLIHLLKGNIGTGLLGLPLAV. Residues 72-77 lie on the Extracellular side of the membrane; it reads KNAGLL. A helical membrane pass occupies residues 78–98; the sequence is LGPLSLLVIGIVAVHCMGILV. The Cytoplasmic segment spans residues 99–140; the sequence is KCAHHLCRRLNKPFLDYGDTVMYGLECSPSTWIRNHSHWGRR. The helical transmembrane segment at 141 to 161 threads the bilayer; sequence IVDFFLVVTQLGFCCVYFVFL. The Extracellular portion of the chain corresponds to 162–189; the sequence is ADNFKQVIEAANGTTTNCNNNETVILTP. N-linked (GlcNAc...) asparagine glycans are attached at residues N173 and N182. A disulfide bridge connects residues C179 and C328. Residues 190–210 form a helical membrane-spanning segment; that stretch reads TMDSRLYMLTFLPFLVLLSFI. Topologically, residues 211–214 are cytoplasmic; the sequence is RNLR. Residues 215–235 traverse the membrane as a helical segment; that stretch reads ILSIFSLLANISMFVSLIMIY. At 236 to 256 the chain is on the extracellular side; sequence QFIVQRIPDPSHLPLVAPWKT. Residues 257–277 form a helical membrane-spanning segment; that stretch reads YPLFFGTAIFAFEGIGVVLPL. Residues 278–288 lie on the Cytoplasmic side of the membrane; that stretch reads ENKMKDSQKFP. Residues 289–309 traverse the membrane as a helical segment; sequence LILYLGMAIITVLYISLGSLG. The Extracellular portion of the chain corresponds to 310-341; that stretch reads YLQFGADIKGSITLNLPNCWLYQSVKLLYSIG. Residues 342–362 traverse the membrane as a helical segment; the sequence is IFFTYALQFYVAAEIIIPAIV. Over 363-371 the chain is Cytoplasmic; sequence SRVPERFEL. A helical transmembrane segment spans residues 372 to 392; it reads VVDLSARTAMVCVTCVLAVLI. Residues 393–396 lie on the Extracellular side of the membrane; it reads PRLD. The chain crosses the membrane as a helical span at residues 397-417; sequence LVISLVGSVSSSALALIIPPL. At 418–438 the chain is on the cytoplasmic side; the sequence is LEVTTYYGEGISPLTITKDAL. Residues 439–459 traverse the membrane as a helical segment; it reads ISILGFVGFVVGTYESLWELI. Over 460–475 the chain is Extracellular; it reads QPSHSDSSTNSTSAFI. The N-linked (GlcNAc...) asparagine glycan is linked to N469.

This sequence belongs to the amino acid/polyamine transporter 2 family. In terms of tissue distribution, widely expressed and predominantly expressed in brain. Within the brain, expression restricted to neurons and not detected in glial cells. Abundant in regions rich in neurons using glutamate and GABA such as Purkinje cells in the cerebellum and pyramidal cells in the hippocampus.

It is found in the cell membrane. The protein resides in the apical cell membrane. It localises to the lysosome membrane. It carries out the reaction glycine(in) + H(+)(in) = glycine(out) + H(+)(out). The catalysed reaction is L-proline(out) + H(+)(out) = L-proline(in) + H(+)(in). The enzyme catalyses D-proline(out) + H(+)(out) = D-proline(in) + H(+)(in). It catalyses the reaction L-alanine(in) + H(+)(in) = L-alanine(out) + H(+)(out). It carries out the reaction D-alanine(in) + H(+)(in) = D-alanine(out) + H(+)(out). The catalysed reaction is L-serine(in) + H(+)(in) = L-serine(out) + H(+)(out). The enzyme catalyses D-serine(out) + H(+)(out) = D-serine(in) + H(+)(in). It catalyses the reaction 4-aminobutanoate(in) + H(+)(in) = 4-aminobutanoate(out) + H(+)(out). It carries out the reaction beta-alanine(in) + H(+)(in) = beta-alanine(out) + H(+)(out). Electrogenic proton/amino acid symporter with selectivity for small apolar L-amino acids, their D-enantiomers and selected amino acid derivatives such as 4-aminobutanoate/GABA. May be involved in the efflux from the lysosomal compartment of neutral amino acids resulting from proteolysis. May play a role in specifying sites for exocytosis in neurons. In Rattus norvegicus (Rat), this protein is Proton-coupled amino acid transporter 1.